We begin with the raw amino-acid sequence, 414 residues long: uncharacterized protein (414 aa).

3 disordered regions span residues 136 to 168 (SSKS…TVPT), 297 to 333 (PQNF…ENAS), and 346 to 414 (ALNA…NGSK). Over residues 350-359 (PSRSRPTHGS) the composition is skewed to polar residues. A compositionally biased stretch (basic and acidic residues) spans 399-414 (SKSEKIYPEPRRNGSK).

This is an uncharacterized protein from Homo sapiens (Human).